The primary structure comprises 597 residues: Protein Spindly (597 aa).

Position 1 is an N-acetylmethionine (methionine 1). A coiled-coil region spans residues 1–445; sequence MEADITNLRN…LKLKYEPEER (445 aa). Phosphoserine is present on residues serine 508 and serine 547. The interval 531–597 is disordered; that stretch reads PASTEVLHEQ…STPEMQCPQQ (67 aa). Residues 540-549 show a composition bias toward polar residues; it reads QSGNTPSSPR. The segment covering 550-574 has biased composition (basic and acidic residues); sequence LTEESRLPTKVKERKEATSKLEKGA. Polar residues predominate over residues 583–597; sequence YVSSKSTPEMQCPQQ.

Belongs to the Spindly family. Interacts with KNTC1 and ZW10. These interactions appear weak and may be transient or indirect. Interacts with dynein intermediate chain and dynactin (DCTN1). Interacts with the catalytically active form of USP45. In terms of processing, monoubiquitinated with'Lys-48' linkage. Deubiquitinated by USP45.

The protein localises to the cytoplasm. The protein resides in the cytoskeleton. It is found in the microtubule organizing center. Its subcellular location is the centrosome. It localises to the chromosome. The protein localises to the centromere. The protein resides in the kinetochore. It is found in the nucleus. Its subcellular location is the spindle pole. Required for the localization of dynein and dynactin to the mitotic kintochore. Dynein is believed to control the initial lateral interaction between the kinetochore and spindle microtubules and to facilitate the subsequent formation of end-on kinetochore-microtubule attachments mediated by the NDC80 complex. Also required for correct spindle orientation. Does not appear to be required for the removal of spindle assembly checkpoint (SAC) proteins from the kinetochore upon bipolar spindle attachment. Acts as an adapter protein linking the dynein motor complex to various cargos and converts dynein from a non-processive to a highly processive motor in the presence of dynactin. Facilitates the interaction between dynein and dynactin and activates dynein processivity (the ability to move along a microtubule for a long distance without falling off the track). Plays a role in cell migration. The sequence is that of Protein Spindly (Spdl1) from Rattus norvegicus (Rat).